Reading from the N-terminus, the 75-residue chain is UPF0352 protein YejL (75 aa).

The protein belongs to the UPF0352 family.

The chain is UPF0352 protein YejL from Shigella dysenteriae serotype 1 (strain Sd197).